Here is a 181-residue protein sequence, read N- to C-terminus: Nucleoside diphosphate kinase, mitochondrial (181 aa).

Residues 1 to 10 (MFRGGTHRLR) are compositionally biased toward basic residues. The interval 1–22 (MFRGGTHRLRGQPGLSLPHGPR) is disordered. Residues 1-24 (MFRGGTHRLRGQPGLSLPHGPRCY) constitute a mitochondrion transit peptide. Positions 40, 88, 116, 122, 133, and 143 each coordinate ATP. Residue H146 is the Pros-phosphohistidine intermediate of the active site.

The protein belongs to the NDK family. Mg(2+) serves as cofactor. In terms of tissue distribution, highest levels in the liver and kidney with lower levels in the heart, brain and breast muscle.

It localises to the mitochondrion intermembrane space. The protein localises to the mitochondrion matrix. It carries out the reaction a 2'-deoxyribonucleoside 5'-diphosphate + ATP = a 2'-deoxyribonucleoside 5'-triphosphate + ADP. The catalysed reaction is a ribonucleoside 5'-diphosphate + ATP = a ribonucleoside 5'-triphosphate + ADP. Feedback inhibition by ADP. Functionally, major role in the synthesis of nucleoside triphosphates other than ATP. The ATP gamma phosphate is transferred to the NDP beta phosphate via a ping-pong mechanism, using a phosphorylated active-site intermediate. Through the catalyzed exchange of gamma-phosphate between di- and triphosphonucleosides participates in regulation of intracellular nucleotide homeostasis. Binds to anionic phospholipids, predominantly to cardiolipin; the binding inhibits its phosphotransfer activity. Acts as a mitochondria-specific NDK coupled to respiration. Promotes the redistribution of cardiolipin between the mitochondrial inner membrane and outer membrane which is implicated in pro-apoptotic signaling. The polypeptide is Nucleoside diphosphate kinase, mitochondrial (NME4) (Columba livia (Rock dove)).